Here is a 664-residue protein sequence, read N- to C-terminus: Glycine--tRNA ligase beta subunit (664 aa).

This sequence belongs to the class-II aminoacyl-tRNA synthetase family. Tetramer of two alpha and two beta subunits.

Its subcellular location is the cytoplasm. It catalyses the reaction tRNA(Gly) + glycine + ATP = glycyl-tRNA(Gly) + AMP + diphosphate. The protein is Glycine--tRNA ligase beta subunit of Rickettsia typhi (strain ATCC VR-144 / Wilmington).